The following is a 394-amino-acid chain: Phosphopentomutase (394 aa).

Residues Asp-15, Asp-288, His-293, Asp-329, His-330, and His-341 each coordinate Mn(2+).

The protein belongs to the phosphopentomutase family. The cofactor is Mn(2+).

It localises to the cytoplasm. It carries out the reaction 2-deoxy-alpha-D-ribose 1-phosphate = 2-deoxy-D-ribose 5-phosphate. It catalyses the reaction alpha-D-ribose 1-phosphate = D-ribose 5-phosphate. Its pathway is carbohydrate degradation; 2-deoxy-D-ribose 1-phosphate degradation; D-glyceraldehyde 3-phosphate and acetaldehyde from 2-deoxy-alpha-D-ribose 1-phosphate: step 1/2. In terms of biological role, isomerase that catalyzes the conversion of deoxy-ribose 1-phosphate (dRib-1-P) and ribose 1-phosphate (Rib-1-P) to deoxy-ribose 5-phosphate (dRib-5-P) and ribose 5-phosphate (Rib-5-P), respectively. This chain is Phosphopentomutase, found in Bacillus licheniformis (strain ATCC 14580 / DSM 13 / JCM 2505 / CCUG 7422 / NBRC 12200 / NCIMB 9375 / NCTC 10341 / NRRL NRS-1264 / Gibson 46).